The sequence spans 785 residues: Cullin-3 (785 aa).

In terms of domain architecture, Cullin neddylation spans 715 to 777 (SRKHQADACI…REYLQRQADN (63 aa)). Lys-729 is covalently cross-linked (Glycyl lysine isopeptide (Lys-Gly) (interchain with G-Cter in NEDD8)).

It belongs to the cullin family. As to quaternary structure, probable component of multiple cullin-RING-based BC3B (BTB-CUL3-BTB) E3 ubiquitin-protein ligase complexes formed by cul-3, rbx-1 and a variable BTB domain-containing protein as adapter and substrate recognition component. Interacts with btb1, btb2, btb3, nedd8 and pip1. Neddylated; enhancing the ubiquitin-ligase activity.

The protein localises to the cytoplasm. Its pathway is protein modification; protein ubiquitination. In terms of biological role, probable core component of multiple cullin-RING-based BC3B (BTB-CUL3-BTB) E3 ubiquitin-protein ligase complexes which mediate the ubiquitination and subsequent proteasomal degradation of target proteins. As a scaffold protein may contribute to catalysis through positioning of the substrate and the ubiquitin-conjugating enzyme. The functional specificity of the BC3B complex depends on the substrate recognition component. Involved in ubiquitin-mediated degradation of btb3. The chain is Cullin-3 (cul3) from Schizosaccharomyces pombe (strain 972 / ATCC 24843) (Fission yeast).